Reading from the N-terminus, the 248-residue chain is Chromatin target of PRMT1 protein (248 aa).

N-acetylalanine is present on alanine 2. 3 positions are modified to phosphoserine: serine 40, serine 49, and serine 64. A Glycyl lysine isopeptide (Lys-Gly) (interchain with G-Cter in SUMO2) cross-link involves residue lysine 70. Positions 151–204 (LRRGGVRGRGGPGRGGLGRGAMGRGGIGGRGRGMIGRGRGGFGGRGRGRGRGRG) are disordered. The segment at 153–206 (RGGVRGRGGPGRGGLGRGAMGRGGIGGRGRGMIGRGRGGFGGRGRGRGRGRGAL) is interaction with PRMT1. The span at 157–195 (RGRGGPGRGGLGRGAMGRGGIGGRGRGMIGRGRGGFGGR) shows a compositional bias: gly residues. The short motif at 194 to 203 (GRGRGRGRGR) is the GAR motif; involved in 5hmC binding element. Position 242 is a phosphothreonine (threonine 242).

As to quaternary structure, interacts with PRMT1 and PRMT5. Interacts with the 5FMC complex; the interaction is methylation-dependent. Interacts with FYTTD1, SET and PRC1 complex members CBX4, RNF2 and PHC2; the interactions are methylation-independent. Interacts with ZNF148. Interacts with WDR77 and ER. Post-translationally, asymmetrically methylated by PRMT1. Symmetrically methylated by PRMT5.

It localises to the nucleus. It is found in the nucleolus. The protein resides in the nucleoplasm. The protein localises to the nucleus speckle. Functionally, plays an important role in the ligand-dependent activation of estrogen receptor target genes. May play a role in the silencing of fetal globin genes. Recruits the 5FMC complex to ZNF148, leading to desumoylation of ZNF148 and subsequent transactivation of ZNF148 target genes. Required for the tumorigenicity of glioblastoma cells. Binds to 5-hydroxymethylcytosine (5hmC) and associates with the methylosome complex containing PRMT1, PRMT5, MEP50 and ERH. The CHTOP-methylosome complex associated with 5hmC methylates H4R3 and transactivates genes involved in glioblastomagenesis. The sequence is that of Chromatin target of PRMT1 protein (Chtop) from Rattus norvegicus (Rat).